The sequence spans 106 residues: MVNVPKTRRTYCKKCKKHQPHKVTQYKKGKDSLYAQGKRRYDRKQSGYGGQTKPIFRKKAKTTKKIVLRLECVEPNCRSKRMLAIKRCKHFELGGDKKRKGQVIQF.

The disordered stretch occupies residues 26–53 (YKKGKDSLYAQGKRRYDRKQSGYGGQTK).

Belongs to the eukaryotic ribosomal protein eL42 family. Component of the large ribosomal subunit.

It is found in the cytoplasm. Functionally, component of the large ribosomal subunit. The ribosome is a large ribonucleoprotein complex responsible for the synthesis of proteins in the cell. The sequence is that of Large ribosomal subunit protein eL42 (rpl36a) from Danio rerio (Zebrafish).